A 682-amino-acid polypeptide reads, in one-letter code: E3 ubiquitin ligase Rnf157 (682 aa).

Gly-2 is lipidated: N-myristoyl glycine. The RING-type; degenerate zinc finger occupies 277-317; the sequence is CVVCLSDVRDTLILPCRHCASCNVHCADTLRYQANNCPICR. The D-box 1 signature appears at 330-333; the sequence is RKKL. Disordered stretches follow at residues 440-604 and 655-682; these read QNSS…VQED and NTQRRRLSPSSLEDPEEDRPCVWDPLAV. The segment covering 479–538 has biased composition (polar residues); sequence ESENLTLSSSGAVDQSSCTGTPLSSTISSPEDPASSSLAQSVMSMASSQISTDTVSSMSG. Acidic residues predominate over residues 585–597; that stretch reads QDAEGNDIMEEED. The short motif at 658–661 is the D-box 2 element; sequence RRRL. 3 positions are modified to phosphoserine: Ser-662, Ser-664, and Ser-665.

Interacts with APBB1. Interacts with CHD1; CHD1-binding controls RNF157 stability. Also interacts with ATRN, MEGF8, TECR, MSI2, PLRG1, BYSL, MTERF3, PSMA1, MRPS18B, PRPF4, FASTKD2, SLC25A1, SMU1, CNOT9, MRPS2, MAGT1, FXR2, EMD, PSMD8, HDAC1, RAN, HSD17B12, TXNDC5 and MRPL19. As to expression, predominantly expressed in the brain.

The protein resides in the cytoplasm. It carries out the reaction S-ubiquitinyl-[E2 ubiquitin-conjugating enzyme]-L-cysteine + [acceptor protein]-L-lysine = [E2 ubiquitin-conjugating enzyme]-L-cysteine + N(6)-ubiquitinyl-[acceptor protein]-L-lysine.. Its function is as follows. E3 ubiquitin ligase that ubiquitinates APBB1 for its degradation by the proteasome and thus prevents apoptosis and promotes survival of neurons. Has a dual role in neurons as it is also required for dendrite growth and maintenance for which its ligase activity is not critical. May act as a scaffold molecule to regulate this process. Acts as a downstream effector of the interconnected PI3K and MAPK signaling pathways and thus participates in the regulation of the cell cycle. The polypeptide is E3 ubiquitin ligase Rnf157 (Rnf157) (Rattus norvegicus (Rat)).